The sequence spans 1530 residues: Coiled-coil domain-containing protein 141 (1530 aa).

Thr-91 bears the Phosphothreonine mark. Coiled coils occupy residues 642 to 706, 758 to 783, and 861 to 970; these read VKNE…EALM, VKEK…QDYE, and SNVS…KTSD. The disordered stretch occupies residues 1210 to 1241; it reads SPDDISLPPLPGSPESPLAPSDMEVEEPVSSS. An Ig-like domain is found at 1409–1530; the sequence is PNFSRLLSNV…VSLMYWLLTQ (122 aa).

Interacts with DISC1. Interacts preferentially with phosphorylated forms of myosin regulatory light chain (MRLC). Interacts (via the N-terminal region) with HDAC6; inhibits the deacetylase activity of HDAC6. Interacts with KIBRA (via the C-terminal region); retains AMPAR in the cytosol after internalization. Post-translationally, ubiquitinated and degradated by the CDC20-APC/C pathway. During brain development, CDC20-APC/C complex degrades CCDC141 after centrosome translocation into the dilated area. CCDC141 is restabilized in the dilation until the centrosome enters the dilation, at which point it is once again immediately destabilized by CDC20-APC/C complex. The oscillatory regulation of CCDC141 protein is needed for proper cortical migration. In terms of processing, phosphorylation at Thr-91 by PLK1 affects CCDC141 degradation.

It localises to the cytoplasm. The protein resides in the cytoskeleton. It is found in the microtubule organizing center. Its subcellular location is the centrosome. In terms of biological role, plays a critical role in cortical radial and GnRH neurons migration during brain development. Regulates cortical radial migration by negatively controlling the activity of histone deacetylase 6 (HDAC6) and promotes centrosome maturation. CAMDI is required for dilation formation of cortical neurons during radial migration. Plays a critical role in learning and memory performance through regulation of AMPA-selective glutamate receptors (AMPARs) cell surface expression in competition with KIBRA. The chain is Coiled-coil domain-containing protein 141 (CCDC141) from Homo sapiens (Human).